A 449-amino-acid chain; its full sequence is Procollagen C-endopeptidase enhancer 1 (449 aa).

The first 25 residues, 1 to 25 (MLPAATASLLGPLLTACALLPFAQG), serve as a signal peptide directing secretion. Residue Asn-29 is glycosylated (N-linked (GlcNAc...) asparagine). 7 disulfide bridges follow: Cys-37-Cys-63, Cys-90-Cys-112, Cys-159-Cys-186, Cys-213-Cys-236, Cys-318-Cys-386, Cys-322-Cys-389, and Cys-333-Cys-437. CUB domains lie at 37–149 (CGGD…YSGR) and 159–273 (CGGR…YKTL). Position 50 is a phosphoserine (Ser-50). The disordered stretch occupies residues 271–321 (KTLPRGTAKEGQGPGPKRGTEPKVKLPPKSQPPEKTEESPSAPDAPTCPKQ). In terms of domain architecture, NTR spans 318–437 (CPKQCRRTGT…ILTNLSKRKC (120 aa)). The N-linked (GlcNAc...) asparagine glycan is linked to Asn-431.

In terms of assembly, interacts with EFEMP2. In terms of processing, C-terminally processed at multiple positions.

The protein resides in the secreted. Functionally, binds to the C-terminal propeptide of type I procollagen and enhances procollagen C-proteinase activity. Its function is as follows. C-terminal processed part of PCPE (CT-PCPE) may have an metalloproteinase inhibitory activity. The polypeptide is Procollagen C-endopeptidase enhancer 1 (PCOLCE) (Homo sapiens (Human)).